A 383-amino-acid polypeptide reads, in one-letter code: GTP-binding protein 10 (383 aa).

Positions 13–148 constitute an Obg domain; sequence GNFIDNLRIY…RIIHLDLKLI (136 aa). The region spanning 149-344 is the OBG-type G domain; it reads SDVGLVGFPN…LIGCIRKTMD (196 aa). GTP contacts are provided by residues 155–162, 202–206, and 278–281; these read GFPNAGKS, DLPGL, and NKMD. The interval 362-383 is disordered; that stretch reads LQKETSRTVKRNLKNSPQRTHH. Positions 369–383 are enriched in basic residues; that stretch reads TVKRNLKNSPQRTHH.

It belongs to the TRAFAC class OBG-HflX-like GTPase superfamily. OBG GTPase family.

It localises to the nucleus. It is found in the nucleolus. Its function is as follows. May be involved in the ribosome maturation process. The sequence is that of GTP-binding protein 10 (gtpbp10) from Xenopus tropicalis (Western clawed frog).